A 676-amino-acid chain; its full sequence is Methionine--tRNA ligase (676 aa).

A 'HIGH' region motif is present at residues 15 to 25; that stretch reads PYANGSIHLGH. Residues Cys146, Cys149, Cys159, and Cys162 each contribute to the Zn(2+) site. Positions 332–336 match the 'KMSKS' region motif; the sequence is KMSKS. Lys335 is an ATP binding site. The region spanning 574–676 is the tRNA-binding domain; it reads DFAKVDMRIA…SGAQPGQQVK (103 aa).

The protein belongs to the class-I aminoacyl-tRNA synthetase family. MetG type 1 subfamily. As to quaternary structure, homodimer. Zn(2+) serves as cofactor.

It localises to the cytoplasm. It catalyses the reaction tRNA(Met) + L-methionine + ATP = L-methionyl-tRNA(Met) + AMP + diphosphate. Functionally, is required not only for elongation of protein synthesis but also for the initiation of all mRNA translation through initiator tRNA(fMet) aminoacylation. This is Methionine--tRNA ligase from Erwinia tasmaniensis (strain DSM 17950 / CFBP 7177 / CIP 109463 / NCPPB 4357 / Et1/99).